We begin with the raw amino-acid sequence, 964 residues long: Activator of stress genes 1 (964 aa).

Residues 21-47 constitute a DNA-binding region (zn(2)-C6 fungal-type); the sequence is CDECRKKKVKCDGQQPCIHCTVYSYEC. A disordered region spans residues 104 to 125; sequence ASTIPASNNPSKPRKYKTKSTR. S166 bears the Phosphoserine; by ATM or ATR mark. A Phosphoserine modification is found at S186. 3 stretches are compositionally biased toward polar residues: residues 190 to 201, 209 to 225, and 733 to 759; these read PVLSSNSKNSTP, KSDS…DSVD, and NNTP…TNMS. 3 disordered regions span residues 190 to 225, 733 to 764, and 800 to 900; these read PVLS…DSVD, NNTP…ERDP, and NSAF…SPSY. Low complexity predominate over residues 800-896; that stretch reads NSAFDFSSSK…NDFGIKIDNN (97 aa). S963 is modified (phosphoserine).

It belongs to the ASG1 family.

It is found in the nucleus. Functionally, probable transcription factor involved in the stress response. This chain is Activator of stress genes 1 (ASG1), found in Saccharomyces cerevisiae (strain ATCC 204508 / S288c) (Baker's yeast).